Here is a 92-residue protein sequence, read N- to C-terminus: Acylphosphatase (92 aa).

The Acylphosphatase-like domain occupies 6–92; the sequence is RAHVYVSGRV…EGVDGFEIRR (87 aa). Active-site residues include Arg-21 and Asn-39.

It belongs to the acylphosphatase family.

It catalyses the reaction an acyl phosphate + H2O = a carboxylate + phosphate + H(+). This is Acylphosphatase (acyP) from Natronomonas pharaonis (strain ATCC 35678 / DSM 2160 / CIP 103997 / JCM 8858 / NBRC 14720 / NCIMB 2260 / Gabara) (Halobacterium pharaonis).